Here is a 312-residue protein sequence, read N- to C-terminus: Acetyl-coenzyme A carboxylase carboxyl transferase subunit alpha (312 aa).

Positions 36–286 (ELEKEIEKTF…KTYFLESVKA (251 aa)) constitute a CoA carboxyltransferase C-terminal domain.

Belongs to the AccA family. As to quaternary structure, acetyl-CoA carboxylase is a heterohexamer composed of biotin carboxyl carrier protein (AccB), biotin carboxylase (AccC) and two subunits each of ACCase subunit alpha (AccA) and ACCase subunit beta (AccD).

The protein localises to the cytoplasm. The enzyme catalyses N(6)-carboxybiotinyl-L-lysyl-[protein] + acetyl-CoA = N(6)-biotinyl-L-lysyl-[protein] + malonyl-CoA. It participates in lipid metabolism; malonyl-CoA biosynthesis; malonyl-CoA from acetyl-CoA: step 1/1. Functionally, component of the acetyl coenzyme A carboxylase (ACC) complex. First, biotin carboxylase catalyzes the carboxylation of biotin on its carrier protein (BCCP) and then the CO(2) group is transferred by the carboxyltransferase to acetyl-CoA to form malonyl-CoA. The sequence is that of Acetyl-coenzyme A carboxylase carboxyl transferase subunit alpha from Sulfurovum sp. (strain NBC37-1).